A 156-amino-acid polypeptide reads, in one-letter code: Methylated-DNA--protein-cysteine methyltransferase (156 aa).

Cys-120 functions as the Nucleophile; methyl group acceptor in the catalytic mechanism.

This sequence belongs to the MGMT family.

The protein localises to the cytoplasm. It carries out the reaction a 6-O-methyl-2'-deoxyguanosine in DNA + L-cysteinyl-[protein] = S-methyl-L-cysteinyl-[protein] + a 2'-deoxyguanosine in DNA. The catalysed reaction is a 4-O-methyl-thymidine in DNA + L-cysteinyl-[protein] = a thymidine in DNA + S-methyl-L-cysteinyl-[protein]. Its function is as follows. Involved in the cellular defense against the biological effects of O6-methylguanine (O6-MeG) and O4-methylthymine (O4-MeT) in DNA. Repairs the methylated nucleobase in DNA by stoichiometrically transferring the methyl group to a cysteine residue in the enzyme. This is a suicide reaction: the enzyme is irreversibly inactivated. In Metallosphaera sedula (strain ATCC 51363 / DSM 5348 / JCM 9185 / NBRC 15509 / TH2), this protein is Methylated-DNA--protein-cysteine methyltransferase.